The following is a 291-amino-acid chain: ATP synthase gamma chain (291 aa).

It belongs to the ATPase gamma chain family. As to quaternary structure, F-type ATPases have 2 components, CF(1) - the catalytic core - and CF(0) - the membrane proton channel. CF(1) has five subunits: alpha(3), beta(3), gamma(1), delta(1), epsilon(1). CF(0) has three main subunits: a, b and c.

The protein resides in the cell inner membrane. Produces ATP from ADP in the presence of a proton gradient across the membrane. The gamma chain is believed to be important in regulating ATPase activity and the flow of protons through the CF(0) complex. This is ATP synthase gamma chain from Persephonella marina (strain DSM 14350 / EX-H1).